Reading from the N-terminus, the 45-residue chain is Large ribosomal subunit protein bL34 (45 aa).

The segment at 1–45 (MTKRTLGGTSRKRKRVSGFRVRMRSHTGRRVIRTRRKRGRSRLAV) is disordered. Basic residues predominate over residues 10 to 45 (SRKRKRVSGFRVRMRSHTGRRVIRTRRKRGRSRLAV).

Belongs to the bacterial ribosomal protein bL34 family.

The polypeptide is Large ribosomal subunit protein bL34 (Parasynechococcus marenigrum (strain WH8102)).